The chain runs to 129 residues: Protein Turandot A1 (129 aa).

A signal peptide spans 1 to 21 (MNSSTALMCFALLLISPLCMG). N-linked (GlcNAc...) asparagine glycosylation is present at Asn-49.

The protein belongs to the Turandot family.

It is found in the secreted. In terms of biological role, a humoral factor that plays a role in stress tolerance; gives increased resistance to the lethal effects of bacterial challenge and stress. Regulated by the JAK/STAT pathway and NF-KB-like Relish pathway in the fat body, upd3 in the hemocytes and Mekk1 in response to septic injury and consequent immune response. The polypeptide is Protein Turandot A1 (TotA1) (Drosophila simulans (Fruit fly)).